A 278-amino-acid polypeptide reads, in one-letter code: tRNA pseudouridine synthase A (278 aa).

Asp52 serves as the catalytic Nucleophile. Tyr111 lines the substrate pocket. Over residues 253–264 the composition is skewed to low complexity; the sequence is AKAGPLEAAPLG. Positions 253–278 are disordered; it reads AKAGPLEAAPLGEAPLKEATLKEDWR. Positions 267–278 are enriched in basic and acidic residues; the sequence is PLKEATLKEDWR.

This sequence belongs to the tRNA pseudouridine synthase TruA family. Homodimer.

The enzyme catalyses uridine(38/39/40) in tRNA = pseudouridine(38/39/40) in tRNA. Its function is as follows. Formation of pseudouridine at positions 38, 39 and 40 in the anticodon stem and loop of transfer RNAs. The chain is tRNA pseudouridine synthase A from Rhodospirillum rubrum (strain ATCC 11170 / ATH 1.1.1 / DSM 467 / LMG 4362 / NCIMB 8255 / S1).